The primary structure comprises 340 residues: MSLTITKDNIFPKGYRGRLTEGVTYDERNNTLLWVDIIQGEVHRVFLDNTNINTNTSSSSHETLKWDSSNESIGAICLTNDPNKLIICSKYGLAYGDFSSSTIEYFFKYPHTTNPDEKLRLRSNDGIIDPWGNLWIGVMNDFPIGAKEGIQPEGKLYRIGFSKESNKLTCDVMIENSLISNGLCFNNQGDEFYWTDSLTFKIWKYDYDKTTNKLTNKSVFIDLKQFYPDVEQPEPDGLVMTNNGEIYTCVFSTGTILHVDNQGKEIERIKIAAKRPTCVTIGSGIKNNEMFVTTGHLKLDDEKATIDAINLDGDLGGFLFKLKVDKDLNGQKKNIWGGKV.

It belongs to the SMP-30/CGR1 family.

Functionally, involved in the cell growth regulation. This Candida albicans (strain SC5314 / ATCC MYA-2876) (Yeast) protein is Cell growth-regulated gene 1 protein (CGR1).